The following is a 984-amino-acid chain: Serine/threonine-protein kinase Nek9 (984 aa).

Serine 2 is subject to N-acetylserine. Serine 2, serine 13, serine 16, and serine 20 each carry phosphoserine. Residues 14-43 (INSDFGSESGGGGDSGPGPSAVPGPRAGGG) are disordered. Tyrosine 52 carries the post-translational modification Phosphotyrosine. Positions 52-308 (YIPIRVLGRG…ADALLDLPLL (257 aa)) constitute a Protein kinase domain. 58 to 66 (LGRGAFGEA) is a binding site for ATP. Serine 76 carries the phosphoserine modification. Lysine 81 contacts ATP. The active-site Proton acceptor is aspartate 176. The residue at position 210 (threonine 210) is a Phosphothreonine; by autocatalysis. Threonine 254 is modified (phosphothreonine). Phosphoserine is present on serine 331. Threonine 333 bears the Phosphothreonine mark. RCC1 repeat units lie at residues 388 to 444 (KELY…VTDE), 445 to 498 (GQLY…LTRN), 499 to 550 (KEVY…LTQS), 551 to 615 (GKVL…IDER), 616 to 668 (GRLL…ATDD), and 669 to 726 (NHIF…IVEK). Residues 732 to 896 (TIRSNSSGLS…GKALTSAACA (165 aa)) form an interaction with NEK6 region. Serine 741 bears the Phosphoserine mark. The interval 744-790 (TVVQSSSPGGGIGGGGGGGGGGGGEEEDSQQESETPDPSGGFRGTME) is disordered. Residues 751–766 (PGGGIGGGGGGGGGGG) are compositionally biased toward gly residues. A compositionally biased stretch (acidic residues) spans 767-778 (GEEEDSQQESET). A phosphoserine mark is found at serine 808 and serine 839. The residue at position 891 (threonine 891) is a Phosphothreonine. A coiled-coil region spans residues 896 to 945 (ACSALQVEVDRLQALVLKCLEEQQKLQQENLQMFTQLQKLNKKLEGGQQV). The interval 940 to 984 (EGGQQVGMHSRGTQTAKEEMEMDPKPDLDSESWCLLGTDSCRPSL) is disordered. A Phosphoserine modification is found at serine 949. Residues 955-967 (AKEEMEMDPKPDL) show a composition bias toward basic and acidic residues. Phosphoserine is present on serine 983.

The protein belongs to the protein kinase superfamily. NEK Ser/Thr protein kinase family. NIMA subfamily. Homodimer; homodimerization is required to activate NEK7. Binds to Ran GTPase. Has a greater affinity for Ran-GDP over Ran-GTP. Interacts with SSRP1 and SUPT16H, the 2 subunits of the FACT complex. Interacts with DYNLL1; phosphorylation at Ser-949 strongly reduces DYNLL1 binding. Requires Mg(2+) as cofactor. Post-translationally, autophosphorylated on serine and threonine residues. When complexed with FACT, exhibits markedly elevated phosphorylation on Thr-210. During mitosis, not phosphorylated on Thr-210. Phosphorylated by CDK1 in vitro.

It localises to the cytoplasm. The protein localises to the nucleus. It catalyses the reaction L-seryl-[protein] + ATP = O-phospho-L-seryl-[protein] + ADP + H(+). It carries out the reaction L-threonyl-[protein] + ATP = O-phospho-L-threonyl-[protein] + ADP + H(+). Activated during mitosis by intramolecular autophosphorylation. Activity and autophosphorylation is activated by manganese &gt;&gt; magnesium ions. It is not cell-cycle regulated but activity is higher in G0-arrested cells. Pleiotropic regulator of mitotic progression, participating in the control of spindle dynamics and chromosome separation. Phosphorylates different histones, myelin basic protein, beta-casein, and BICD2. Phosphorylates histone H3 on serine and threonine residues and beta-casein on serine residues. Important for G1/S transition and S phase progression. Phosphorylates NEK6 and NEK7 and stimulates their activity by releasing the autoinhibitory functions of Tyr-108 and Tyr-97 respectively. This chain is Serine/threonine-protein kinase Nek9, found in Mus musculus (Mouse).